We begin with the raw amino-acid sequence, 61 residues long: uncharacterized protein (61 aa).

This is an uncharacterized protein from Archaeoglobus fulgidus (strain ATCC 49558 / DSM 4304 / JCM 9628 / NBRC 100126 / VC-16).